A 91-amino-acid polypeptide reads, in one-letter code: MFSRVLALLAVLLLSANTWAAIEINNHQARNMDDVQSLGVIYINHNFATESEARQALNEETDAQGATYYHVILMREPGSNGNMHASADIYR.

Residues 1 to 20 form the signal peptide; the sequence is MFSRVLALLAVLLLSANTWA.

This sequence belongs to the BhsA/McbA family.

The protein resides in the periplasm. This is an uncharacterized protein from Escherichia coli O157:H7.